A 361-amino-acid chain; its full sequence is Salt tolerance receptor-like cytoplasmic kinase 1 (361 aa).

Residues cysteine 5, cysteine 10, and cysteine 14 are each lipidated (S-palmitoyl cysteine). The region spanning 67-347 (GFSSRVIGHG…RALQEKTSAL (281 aa)) is the Protein kinase domain. ATP contacts are provided by residues 73 to 81 (IGHGGFSTV) and lysine 95. Aspartate 195 (proton acceptor) is an active-site residue.

Belongs to the protein kinase superfamily. Ser/Thr protein kinase family. In terms of assembly, self-interacts. Interacts with CATA, CATB and CATC at the plasma membrane. Post-translationally, palmitoylated. Palmotylation at Cys-5, Cys-10 and Cys-14 by DHHC9 is required for plasma membrane targeting and STRK1 function. Autophosphorylated. As to expression, accumulates in seeds. Mainly expressed in young roots, and, to a lower extent, in leaf veins, seedlings, stems, leaf sheath and young spikelet.

The protein localises to the cell membrane. It catalyses the reaction L-seryl-[protein] + ATP = O-phospho-L-seryl-[protein] + ADP + H(+). The catalysed reaction is L-threonyl-[protein] + ATP = O-phospho-L-threonyl-[protein] + ADP + H(+). It carries out the reaction L-tyrosyl-[protein] + ATP = O-phospho-L-tyrosyl-[protein] + ADP + H(+). Acts probably as a dual specificity protein kinase. Regulates hydrogen peroxide (H(2)O(2)) homeostasis and improves salt tolerance by phosphorylating tyrosine residues of CATC thus activating its catalase activity. Promotes growth at the seedling stage and prevents grain yield loss under salt stress conditions. The protein is Salt tolerance receptor-like cytoplasmic kinase 1 of Oryza sativa subsp. japonica (Rice).